The chain runs to 445 residues: 3-phosphoshikimate 1-carboxyvinyltransferase (445 aa).

Residues 1–20 are disordered; the sequence is MSTSAAPTPLESRASGPLSG. Residues Lys-28, Ser-29, and Arg-33 each contribute to the 3-phosphoshikimate site. Lys-28 contacts phosphoenolpyruvate. Phosphoenolpyruvate-binding residues include Gly-101 and Arg-129. 3-phosphoshikimate-binding residues include Ser-175, Gln-177, Asp-328, and Lys-355. Residue Gln-177 coordinates phosphoenolpyruvate. Asp-328 functions as the Proton acceptor in the catalytic mechanism. The phosphoenolpyruvate site is built by Arg-359 and Arg-402.

This sequence belongs to the EPSP synthase family. As to quaternary structure, monomer.

It localises to the cytoplasm. It catalyses the reaction 3-phosphoshikimate + phosphoenolpyruvate = 5-O-(1-carboxyvinyl)-3-phosphoshikimate + phosphate. It participates in metabolic intermediate biosynthesis; chorismate biosynthesis; chorismate from D-erythrose 4-phosphate and phosphoenolpyruvate: step 6/7. Functionally, catalyzes the transfer of the enolpyruvyl moiety of phosphoenolpyruvate (PEP) to the 5-hydroxyl of shikimate-3-phosphate (S3P) to produce enolpyruvyl shikimate-3-phosphate and inorganic phosphate. This chain is 3-phosphoshikimate 1-carboxyvinyltransferase, found in Bradyrhizobium sp. (strain ORS 278).